The sequence spans 532 residues: Collagen alpha-1(XXIII) chain (532 aa).

Topologically, residues 1 to 23 (MGAGERAAGGGGTQDPGAGCGAR) are cytoplasmic. Residues 24–45 (ALGALCLLLSVGSATACLLLGA) traverse the membrane as a helical; Signal-anchor for type II membrane protein segment. Residues 46–532 (QAAALHGRVA…GLPVPGCWHK (487 aa)) lie on the Extracellular side of the membrane. Residues 102–532 (PSECICPPGP…GLPVPGCWHK (431 aa)) are disordered. Collagen-like domains are found at residues 108-163 (PPGP…FGPR), 173-232 (GPPG…PGKK), 242-297 (GLPG…EQGD), and 313-372 (GPPG…MGLS). Low complexity-rich tracts occupy residues 129 to 145 (QSGR…DGKP) and 157 to 172 (PGDF…DGAA). Pro residues-rich tracts occupy residues 174-184 (PPGPPGPPGAR), 241-250 (PGLPGPPGPK), and 314-326 (PPGP…PPGI). 2 stretches are compositionally biased toward basic and acidic residues: residues 342–354 (DGEK…KGDP) and 380–393 (PKGE…DHLQ). Residues 403 to 414 (PGPPGPPGPPGP) show a composition bias toward pro residues. Collagen-like domains lie at 404–452 (GPPG…GPPG) and 455–514 (GLPG…PGLD). Composition is skewed to basic and acidic residues over residues 427–441 (DGAK…ERGP) and 478–495 (RGEK…ERGV).

Homotrimer. Post-translationally, undergoes proteolytic cleavage by furin protease to yield a 60 kDa soluble form that forms a homotrimer and exhibits a low affinity interaction with heparin.

The protein localises to the cell membrane. The protein is Collagen alpha-1(XXIII) chain (Col23a1) of Rattus norvegicus (Rat).